A 506-amino-acid chain; its full sequence is Histone deacetylase complex subunit CTI6 (506 aa).

The interval 49–71 (EESVKQEDVPMEGGEGEVEEEEG) is disordered. The segment covering 62–71 (GEGEVEEEEG) has biased composition (acidic residues). The PHD-type zinc-finger motif lies at 72–123 (ETRCICGELDTPDDSGFFIQCEQCSSWQHGYCVSITQDNAPDKYWCEQCRPE). Residues 138 to 425 (IYKPVQEKRR…KPRLPPQRTS (288 aa)) are disordered. Threonine 174 carries the post-translational modification Phosphothreonine. Serine 175 carries the post-translational modification Phosphoserine. Threonine 177 carries the post-translational modification Phosphothreonine. Residues 179 to 195 (DNVDDIGDEEDEVEDEA) are compositionally biased toward acidic residues. A phosphoserine mark is found at serine 216 and serine 267. 2 stretches are compositionally biased toward basic and acidic residues: residues 231 to 271 (DSDK…HQED) and 312 to 342 (DDMKESLRPSKEQSMEKTNDVEKEASQEKES). The span at 373–393 (ASSRGSKRVSKPARKGNRTRR) shows a compositional bias: basic residues. Polar residues predominate over residues 394 to 404 (SNTSSDTNQNR). Residues 405–415 (RSADIGTDKPV) are compositionally biased toward basic and acidic residues.

In terms of assembly, component of the RPD3C(L) complex composed of at least ASH1, CTI6, DEP1, PHO23, RPD3, RXT2, RXT3, SAP30, SDS3, SIN3, UME1 and UME6. Interacts with CYC8.

Its subcellular location is the nucleus. Functionally, component of the RPD3C(L) histone deacetylase complex (HDAC). Responsible for the deacetylation of lysine residues on the N-terminal part of the core histones (H2A, H2B, H3 and H4). Histone deacetylation gives a tag for epigenetic repression and plays an important role in transcriptional regulation, cell cycle progression and developmental events. CTI6 links the SAGA coactivator to the CYC8-TUP1 corepressor. Involved in transcription regulation of heme-regulated genes and required for GCN5 recruitment, histone H3 acetylation and SPT15/TBP binding to promoters. This chain is Histone deacetylase complex subunit CTI6 (CTI6), found in Saccharomyces cerevisiae (strain ATCC 204508 / S288c) (Baker's yeast).